The primary structure comprises 262 residues: Lens fiber major intrinsic protein (262 aa).

Residues M1–F9 are Cytoplasmic-facing. A helical membrane pass occupies residues W10 to G29. The Extracellular portion of the chain corresponds to A30–V41. Residues L42–L59 traverse the membrane as a helical segment. The Cytoplasmic segment spans residues G60–H61. An intramembrane region (discontinuously helical) is located at residues V62 to L77. Positions N68 to A70 match the NPA 1 motif. The Cytoplasmic segment spans residues A78–S82. The helical transmembrane segment at L83 to G106 threads the bilayer. Residues V107–P127 are Extracellular-facing. A helical membrane pass occupies residues G128–S148. The Cytoplasmic portion of the chain corresponds to F149–R156. A helical membrane pass occupies residues P157–G175. The Extracellular portion of the chain corresponds to I176 to F178. An intramembrane region (discontinuously helical) is located at residues T179–V193. Positions N184–A186 match the NPA 2 motif. Residues I194–N200 lie on the Extracellular side of the membrane. Residues H201–A222 traverse the membrane as a helical segment. Residues L223–L262 lie on the Cytoplasmic side of the membrane. Residues A227 to L237 form an interaction with CALM region. A disordered region spans residues E240–L262. Residues A243–E253 are compositionally biased toward pro residues.

It belongs to the MIP/aquaporin (TC 1.A.8) family. Homotetramer; each monomer provides an independent water pore. Two homotetramers on opposing membranes can dimerize, forming a cell-cell junction. Interacts with CALM; the calcium-calmodulin/CALM complex interacts with the cytoplasmic domains of two aquaporins, leading to channel closure. During early stages of lens development, interacts through its C-terminal region with Cx56 and GJA8/Cx45.6. As to expression, major component of lens fiber gap junctions.

The protein localises to the cell membrane. It is found in the cell junction. The catalysed reaction is H2O(in) = H2O(out). The water channel activity is inhibited by calcium through calmodulin/CALM. In terms of biological role, aquaporins form homotetrameric transmembrane channels, with each monomer independently mediating water transport across the plasma membrane along its osmotic gradient. Specifically expressed in lens fiber cells, this aquaporin is crucial for maintaining lens water homeostasis and transparency. Beyond water permeability, it also acts as a cell-to-cell adhesion molecule, forming thin junctions between lens fiber cells that are essential for maintaining the ordered structure and transparency of the lens. This Gallus gallus (Chicken) protein is Lens fiber major intrinsic protein.